Here is a 297-residue protein sequence, read N- to C-terminus: GTP cyclohydrolase FolE2 (297 aa).

The protein belongs to the GTP cyclohydrolase IV family.

The catalysed reaction is GTP + H2O = 7,8-dihydroneopterin 3'-triphosphate + formate + H(+). It participates in cofactor biosynthesis; 7,8-dihydroneopterin triphosphate biosynthesis; 7,8-dihydroneopterin triphosphate from GTP: step 1/1. Converts GTP to 7,8-dihydroneopterin triphosphate. This Pseudomonas fluorescens (strain ATCC BAA-477 / NRRL B-23932 / Pf-5) protein is GTP cyclohydrolase FolE2.